The chain runs to 215 residues: ATP-dependent Clp protease proteolytic subunit (215 aa).

S115 serves as the catalytic Nucleophile. H140 is a catalytic residue.

It belongs to the peptidase S14 family. As to quaternary structure, fourteen ClpP subunits assemble into 2 heptameric rings which stack back to back to give a disk-like structure with a central cavity, resembling the structure of eukaryotic proteasomes.

The protein localises to the cytoplasm. The enzyme catalyses Hydrolysis of proteins to small peptides in the presence of ATP and magnesium. alpha-casein is the usual test substrate. In the absence of ATP, only oligopeptides shorter than five residues are hydrolyzed (such as succinyl-Leu-Tyr-|-NHMec, and Leu-Tyr-Leu-|-Tyr-Trp, in which cleavage of the -Tyr-|-Leu- and -Tyr-|-Trp bonds also occurs).. Cleaves peptides in various proteins in a process that requires ATP hydrolysis. Has a chymotrypsin-like activity. Plays a major role in the degradation of misfolded proteins. The chain is ATP-dependent Clp protease proteolytic subunit from Anaplasma marginale (strain Florida).